Reading from the N-terminus, the 143-residue chain is Large ribosomal subunit protein uL15 (143 aa).

Residues Met-1–Glu-51 are disordered. The span at Arg-21–Ala-31 shows a compositional bias: gly residues.

The protein belongs to the universal ribosomal protein uL15 family. In terms of assembly, part of the 50S ribosomal subunit.

Binds to the 23S rRNA. This chain is Large ribosomal subunit protein uL15, found in Variovorax paradoxus (strain S110).